Reading from the N-terminus, the 310-residue chain is Glutaminase (310 aa).

Substrate is bound by residues serine 66, asparagine 117, glutamate 161, asparagine 168, tyrosine 192, tyrosine 244, and valine 262.

It belongs to the glutaminase family. Homotetramer.

The enzyme catalyses L-glutamine + H2O = L-glutamate + NH4(+). The protein is Glutaminase of Desulfovibrio desulfuricans (strain ATCC 27774 / DSM 6949 / MB).